A 347-amino-acid polypeptide reads, in one-letter code: NADH-ubiquinone oxidoreductase chain 2 (347 aa).

11 consecutive transmembrane segments (helical) span residues 1–21, 25–45, 68–88, 96–116, 122–142, 145–165, 178–198, 201–221, 239–259, 274–294, and 326–346; these read MNPM…SIVL, HWFL…PVLM, MILV…TIMI, MLIT…FWVP, VSLS…LSLL, IFPS…IMIG, IMAY…IYNP, SLLN…LLII, IVVS…PLTG, SSVM…FFYM, and MMSL…LITL.

The protein belongs to the complex I subunit 2 family. Core subunit of respiratory chain NADH dehydrogenase (Complex I) which is composed of 45 different subunits. Interacts with TMEM242.

It is found in the mitochondrion inner membrane. It carries out the reaction a ubiquinone + NADH + 5 H(+)(in) = a ubiquinol + NAD(+) + 4 H(+)(out). In terms of biological role, core subunit of the mitochondrial membrane respiratory chain NADH dehydrogenase (Complex I) which catalyzes electron transfer from NADH through the respiratory chain, using ubiquinone as an electron acceptor. Essential for the catalytic activity and assembly of complex I. This is NADH-ubiquinone oxidoreductase chain 2 from Sylvisorex lunaris (Moon forest shrew).